The sequence spans 405 residues: Formate-dependent phosphoribosylglycinamide formyltransferase (405 aa).

Residues 22–23 (EL) and Glu-82 each bind N(1)-(5-phospho-beta-D-ribosyl)glycinamide. Residues Arg-115, Lys-162, 167–172 (SSGKGQ), 202–205 (EGFI), and Glu-210 each bind ATP. An ATP-grasp domain is found at 120 to 320 (RLAAETLGLP…EFELHARAIL (201 aa)). The Mg(2+) site is built by Glu-279 and Glu-291. Residues Asp-298, Lys-367, and 374–375 (RR) contribute to the N(1)-(5-phospho-beta-D-ribosyl)glycinamide site.

This sequence belongs to the PurK/PurT family. In terms of assembly, homodimer.

It carries out the reaction N(1)-(5-phospho-beta-D-ribosyl)glycinamide + formate + ATP = N(2)-formyl-N(1)-(5-phospho-beta-D-ribosyl)glycinamide + ADP + phosphate + H(+). It functions in the pathway purine metabolism; IMP biosynthesis via de novo pathway; N(2)-formyl-N(1)-(5-phospho-D-ribosyl)glycinamide from N(1)-(5-phospho-D-ribosyl)glycinamide (formate route): step 1/1. Its function is as follows. Involved in the de novo purine biosynthesis. Catalyzes the transfer of formate to 5-phospho-ribosyl-glycinamide (GAR), producing 5-phospho-ribosyl-N-formylglycinamide (FGAR). Formate is provided by PurU via hydrolysis of 10-formyl-tetrahydrofolate. The polypeptide is Formate-dependent phosphoribosylglycinamide formyltransferase (Leptothrix cholodnii (strain ATCC 51168 / LMG 8142 / SP-6) (Leptothrix discophora (strain SP-6))).